A 402-amino-acid chain; its full sequence is Olfactomedin-like protein 1 (402 aa).

Residues 1–28 (MMVALRGASALLVLFLAAFLPPPQCTQD) form the signal peptide. N-linked (GlcNAc...) asparagine glycosylation is present at Asn-66. Residues 79 to 133 (SEYKSAVGNLALRVERAQREIDYIQYLREADECIESEDKTLAEMLLQEAEEEKKI) are a coiled coil. 2 N-linked (GlcNAc...) asparagine glycosylation sites follow: Asn-138 and Asn-183. Residues 140 to 397 (SCDNMLMGIK…QIIYKLQTKR (258 aa)) form the Olfactomedin-like domain. The cysteines at positions 141 and 324 are disulfide-linked.

Post-translationally, highly N-glycosylated. Mainly expressed in the small intestine, liver, lung and heart.

It localises to the secreted. This Homo sapiens (Human) protein is Olfactomedin-like protein 1 (OLFML1).